Here is an 807-residue protein sequence, read N- to C-terminus: Phenylalanine--tRNA ligase beta subunit (807 aa).

The 118-residue stretch at 39-156 folds into the tRNA-binding domain; the sequence is AGEFSGVVIG…SDAPLGQCVR (118 aa). The B5 domain maps to 409-488; it reads PQTKDVNLRR…RIFGYNNIPN (80 aa). Mg(2+) is bound by residues aspartate 466, aspartate 472, glutamate 475, and glutamate 476. Residues 713-806 form the FDX-ACB domain; sequence SRFPANRRDL…LKTELNASLR (94 aa).

This sequence belongs to the phenylalanyl-tRNA synthetase beta subunit family. Type 1 subfamily. In terms of assembly, tetramer of two alpha and two beta subunits. Mg(2+) serves as cofactor.

It localises to the cytoplasm. It carries out the reaction tRNA(Phe) + L-phenylalanine + ATP = L-phenylalanyl-tRNA(Phe) + AMP + diphosphate + H(+). The sequence is that of Phenylalanine--tRNA ligase beta subunit from Colwellia psychrerythraea (strain 34H / ATCC BAA-681) (Vibrio psychroerythus).